Here is a 316-residue protein sequence, read N- to C-terminus: Actinorhodin polyketide synthase bifunctional cyclase/dehydratase (316 aa).

Its pathway is antibiotic biosynthesis; actinorhodin biosynthesis. Is needed for correct cyclization of the oligoketide leading to isochromanequinone formation. The sequence is that of Actinorhodin polyketide synthase bifunctional cyclase/dehydratase from Streptomyces coelicolor (strain ATCC BAA-471 / A3(2) / M145).